The following is a 321-amino-acid chain: Lipoyl synthase (321 aa).

The [4Fe-4S] cluster site is built by Cys-68, Cys-73, Cys-79, Cys-94, Cys-98, Cys-101, and Ser-308. The Radical SAM core domain maps to 80 to 297 (FNHGTATFMI…KAEAMAMGFT (218 aa)).

It belongs to the radical SAM superfamily. Lipoyl synthase family. [4Fe-4S] cluster serves as cofactor.

It localises to the cytoplasm. The catalysed reaction is [[Fe-S] cluster scaffold protein carrying a second [4Fe-4S](2+) cluster] + N(6)-octanoyl-L-lysyl-[protein] + 2 oxidized [2Fe-2S]-[ferredoxin] + 2 S-adenosyl-L-methionine + 4 H(+) = [[Fe-S] cluster scaffold protein] + N(6)-[(R)-dihydrolipoyl]-L-lysyl-[protein] + 4 Fe(3+) + 2 hydrogen sulfide + 2 5'-deoxyadenosine + 2 L-methionine + 2 reduced [2Fe-2S]-[ferredoxin]. It participates in protein modification; protein lipoylation via endogenous pathway; protein N(6)-(lipoyl)lysine from octanoyl-[acyl-carrier-protein]: step 2/2. Its function is as follows. Catalyzes the radical-mediated insertion of two sulfur atoms into the C-6 and C-8 positions of the octanoyl moiety bound to the lipoyl domains of lipoate-dependent enzymes, thereby converting the octanoylated domains into lipoylated derivatives. In Yersinia pseudotuberculosis serotype O:1b (strain IP 31758), this protein is Lipoyl synthase.